Reading from the N-terminus, the 111-residue chain is Putative ciliary rootlet coiled-coil protein-like 1 protein (111 aa).

A coiled-coil region spans residues 21–86 (MELELSVTKL…RQAEQEATVA (66 aa)).

The protein belongs to the rootletin family.

In Homo sapiens (Human), this protein is Putative ciliary rootlet coiled-coil protein-like 1 protein (CROCCP2).